The chain runs to 37 residues: Cytochrome b6-f complex subunit 5 (37 aa).

Residues 5–25 traverse the membrane as a helical segment; the sequence is ILLGIVLGMVLVTLAGLFVAA.

Belongs to the PetG family. The 4 large subunits of the cytochrome b6-f complex are cytochrome b6, subunit IV (17 kDa polypeptide, PetD), cytochrome f and the Rieske protein, while the 4 small subunits are PetG, PetL, PetM and PetN. The complex functions as a dimer.

Its subcellular location is the cellular thylakoid membrane. In terms of biological role, component of the cytochrome b6-f complex, which mediates electron transfer between photosystem II (PSII) and photosystem I (PSI), cyclic electron flow around PSI, and state transitions. PetG is required for either the stability or assembly of the cytochrome b6-f complex. In Synechococcus sp. (strain JA-3-3Ab) (Cyanobacteria bacterium Yellowstone A-Prime), this protein is Cytochrome b6-f complex subunit 5.